The following is a 288-amino-acid chain: Histone-lysine N-methyltransferase Suv4-20 (288 aa).

Positions 128 to 238 (QECKRYSQEG…PGDEITCFYG (111 aa)) constitute an SET domain.

The protein belongs to the class V-like SAM-binding methyltransferase superfamily. Histone-lysine methyltransferase family. Suvar4-20 subfamily.

The protein resides in the nucleus. It is found in the chromosome. The catalysed reaction is N(6)-methyl-L-lysyl(20)-[histone H4] + S-adenosyl-L-methionine = N(6),N(6)-dimethyl-L-lysyl(20)-[histone H4] + S-adenosyl-L-homocysteine + H(+). The enzyme catalyses N(6),N(6)-dimethyl-L-lysyl(20)-[histone H4] + S-adenosyl-L-methionine = N(6),N(6),N(6)-trimethyl-L-lysyl(20)-[histone H4] + S-adenosyl-L-homocysteine + H(+). Histone methyltransferase that specifically di- and trimethylates 'Lys-20' of histone H4 (H4K20me2/me3). H4 'Lys-20' trimethylation represents a specific tag for epigenetic transcriptional repression. Contributes to dosage compensation of X chromosome-relative to autosome-linked gene expression, possibly by converting H4K20me1 to H4K20m2/me3 on autosomes. Involved in the regulation of growth and body fat metabolism downstream of the TOR complex 2 pathway. The sequence is that of Histone-lysine N-methyltransferase Suv4-20 (set-4) from Caenorhabditis elegans.